Reading from the N-terminus, the 1516-residue chain is Receptor-type tyrosine-protein phosphatase S (1516 aa).

A signal peptide spans 1-28; sequence MRILPSPGMPALLSLVSLLSVLLMGCVA. The Extracellular segment spans residues 29–854; sequence ESPPVFIKKP…PQPIIDGEEG (826 aa). 3 consecutive Ig-like C2-type domains span residues 32–122, 134–223, and 235–317; these read PVFI…AKLT, PNID…ANLY, and PRFS…AQIT. Intrachain disulfides connect Cys-53–Cys-106 and Cys-155–Cys-206. The tract at residues 67–71 is important for binding to glycosaminoglycan chains; sequence KKGKK. N-linked (GlcNAc...) asparagine glycans are attached at residues Asn-253 and Asn-298. Cysteines 256 and 301 form a disulfide. 4 Fibronectin type-III domains span residues 324–414, 419–513, 517–606, and 608–692; these read APGT…TGEQ, APRN…TQQG, QPMN…TLQS, and LPKN…TAAN. Residues 855–875 form a helical membrane-spanning segment; the sequence is LIWVIGPVLAVVFIICIVIAI. The Cytoplasmic portion of the chain corresponds to 876-1516; that stretch reads LLYKNKRKDS…YLGSFDHYAT (641 aa). Tyrosine-protein phosphatase domains follow at residues 961–1216 and 1248–1507; these read LSQE…LLEA and MELE…ALEY. Residues Cys-1157 and Cys-1448 each act as phosphocysteine intermediate in the active site.

This sequence belongs to the protein-tyrosine phosphatase family. Receptor class 2A subfamily. Homodimer. Binding to large heparan sulfate proteoglycan structures promotes oligomerization. Binding to chondroitin sulfate proteoglycan does not lead to oligomerization. Interacts (via Ig-like domains) with NTRK1 and NTRK3, but does not form detectable complexes with NTRK2. Interacts (via extracellular domain) with the heparan sulfate proteoglycans AGRN and COL18A1. In terms of processing, a cleavage occurs, separating the extracellular domain from the transmembrane segment. This process called 'ectodomain shedding' is thought to be involved in receptor desensitization, signal transduction and/or membrane localization. As to expression, detected in embryonic brain, dorsal root ganglion and spinal cord. Detected in embryonic retina (at protein level). Detected in embryonic brain, spinal cord, dorsal root ganglion, trigeminal ganglion, ganglia associated with the precardinal vein and vagus nerve, the inner and outer nuclear layer of the retina, limb, breast muscle, heart, gut and lung.

The protein resides in the cell membrane. Its subcellular location is the cell projection. It is found in the axon. It localises to the perikaryon. The protein localises to the cytoplasmic vesicle. The protein resides in the secretory vesicle. Its subcellular location is the synaptic vesicle membrane. It is found in the synapse. It localises to the synaptosome. The protein localises to the postsynaptic density. The protein resides in the neuron projection. Its subcellular location is the growth cone. It carries out the reaction O-phospho-L-tyrosyl-[protein] + H2O = L-tyrosyl-[protein] + phosphate. Cell surface receptor that binds to glycosaminoglycans, including chondroitin sulfate proteoglycans and heparan sulfate proteoglycans. Binding to chondroitin sulfate and heparan sulfate proteoglycans has opposite effects on PTPRS oligomerization and regulation of neurite outgrowth. Contributes to the inhibition of neurite and axonal outgrowth by chondroitin sulfate proteoglycans, also after nerve transection. Plays a role in stimulating neurite outgrowth in response to the heparan sulfate proteoglycan GPC2. Required for normal brain development, especially for normal development of the pituitary gland and the olfactory bulb. Functions as tyrosine phosphatase. Mediates dephosphorylation of NTRK1, NTRK2 and NTRK3. Plays a role in down-regulation of signaling cascades that lead to the activation of Akt and MAP kinases. Down-regulates TLR9-mediated activation of NF-kappa-B, as well as production of TNF, interferon alpha and interferon beta. The sequence is that of Receptor-type tyrosine-protein phosphatase S (PTPRS) from Gallus gallus (Chicken).